We begin with the raw amino-acid sequence, 131 residues long: Sec-independent protein translocase protein TatB (131 aa).

A helical membrane pass occupies residues 2-22; it reads LGSLSWEHMLVLVVVGLVVLG. A disordered region spans residues 96-131; sequence AFDRPVNGAAAQPPPAPAPPPEPHRPGQTPFDADAT. Positions 107–116 are enriched in pro residues; the sequence is QPPPAPAPPP.

It belongs to the TatB family. The Tat system comprises two distinct complexes: a TatABC complex, containing multiple copies of TatA, TatB and TatC subunits, and a separate TatA complex, containing only TatA subunits. Substrates initially bind to the TatABC complex, which probably triggers association of the separate TatA complex to form the active translocon.

Its subcellular location is the cell membrane. In terms of biological role, part of the twin-arginine translocation (Tat) system that transports large folded proteins containing a characteristic twin-arginine motif in their signal peptide across membranes. Together with TatC, TatB is part of a receptor directly interacting with Tat signal peptides. TatB may form an oligomeric binding site that transiently accommodates folded Tat precursor proteins before their translocation. This is Sec-independent protein translocase protein TatB from Mycobacterium avium (strain 104).